The chain runs to 218 residues: MSDNDELQQIAHLRREYTKGGLRRRDLPADPLTLFERWLSQACEAKLADPTAMVVATVDEHGQPYQRIVLLKHYDEKGMVFYTNLGSRKAHQIENNPRVSLLFPWHTLERQVMVIGKAERLSTLEVMKYFHSRPRDSQIGSWVSKQSSRISARGILESKFLELKQKFQQGEVPLPSFWGGFRVSLEQIEFWQGGEHRLHDRFLYQRENDAWKIDRLAP.

Substrate contacts are provided by residues 14–17 (RREY) and K72. FMN-binding positions include 67-72 (RIVLLK), 82-83 (YT), R88, K89, and Q111. 3 residues coordinate substrate: Y129, R133, and S137. Residues 146–147 (QS) and W191 each bind FMN. Residue 197–199 (RLH) participates in substrate binding. R201 provides a ligand contact to FMN.

It belongs to the pyridoxamine 5'-phosphate oxidase family. In terms of assembly, homodimer. It depends on FMN as a cofactor.

It carries out the reaction pyridoxamine 5'-phosphate + O2 + H2O = pyridoxal 5'-phosphate + H2O2 + NH4(+). The enzyme catalyses pyridoxine 5'-phosphate + O2 = pyridoxal 5'-phosphate + H2O2. It participates in cofactor metabolism; pyridoxal 5'-phosphate salvage; pyridoxal 5'-phosphate from pyridoxamine 5'-phosphate: step 1/1. Its pathway is cofactor metabolism; pyridoxal 5'-phosphate salvage; pyridoxal 5'-phosphate from pyridoxine 5'-phosphate: step 1/1. Catalyzes the oxidation of either pyridoxine 5'-phosphate (PNP) or pyridoxamine 5'-phosphate (PMP) into pyridoxal 5'-phosphate (PLP). This Escherichia coli O157:H7 protein is Pyridoxine/pyridoxamine 5'-phosphate oxidase.